We begin with the raw amino-acid sequence, 198 residues long: Protein GrpE (198 aa).

It belongs to the GrpE family. In terms of assembly, homodimer.

The protein resides in the cytoplasm. Functionally, participates actively in the response to hyperosmotic and heat shock by preventing the aggregation of stress-denatured proteins, in association with DnaK and GrpE. It is the nucleotide exchange factor for DnaK and may function as a thermosensor. Unfolded proteins bind initially to DnaJ; upon interaction with the DnaJ-bound protein, DnaK hydrolyzes its bound ATP, resulting in the formation of a stable complex. GrpE releases ADP from DnaK; ATP binding to DnaK triggers the release of the substrate protein, thus completing the reaction cycle. Several rounds of ATP-dependent interactions between DnaJ, DnaK and GrpE are required for fully efficient folding. This chain is Protein GrpE, found in Actinobacillus pleuropneumoniae serotype 7 (strain AP76).